The following is a 136-amino-acid chain: Small ribosomal subunit protein uS8c (136 aa).

The protein belongs to the universal ribosomal protein uS8 family. As to quaternary structure, part of the 30S ribosomal subunit.

It localises to the plastid. It is found in the chloroplast. One of the primary rRNA binding proteins, it binds directly to 16S rRNA central domain where it helps coordinate assembly of the platform of the 30S subunit. The protein is Small ribosomal subunit protein uS8c (rps8) of Tetradesmus obliquus (Green alga).